A 292-amino-acid chain; its full sequence is Fat storage-inducing transmembrane protein 1 (292 aa).

Residues 1–18 lie on the Lumenal side of the membrane; it reads MERGPVVGAGLGAGARIQ. Residues 19-39 traverse the membrane as a helical segment; sequence ALLGCLLKVLLWVASALLYFG. Topologically, residues 40–54 are cytoplasmic; the sequence is SEQAARLLGSPCLRR. Residues 55 to 75 traverse the membrane as a helical segment; that stretch reads LYHAWLAAVVIFGPLLQFHVN. At 76-94 the chain is on the lumenal side; sequence PRTIFASHGNFFNIKFVNS. Residues 95–115 traverse the membrane as a helical segment; sequence AWGWTCTFLGGFVLLVVFLAT. The Cytoplasmic portion of the chain corresponds to 116–141; sequence RRVAVTARHLSRLVVGAAVWRGAGRA. Residues 142–162 form a helical membrane-spanning segment; it reads FLLIEDLTGSCFEPLPQGLLL. At 163-187 the chain is on the lumenal side; it reads HELPDRRSCLAAGHQWRGYTVSSHT. Residue His-186 is part of the active site. Residues 188 to 208 traverse the membrane as a helical segment; it reads FLLTFCCLLMAEEAAVFAKYL. Topologically, residues 209-220 are cytoplasmic; the sequence is AHGLPAGAPLRL. The chain crosses the membrane as a helical span at residues 221–241; it reads VFLLNVLLLGLWNFLLLCTVI. The Lumenal portion of the chain corresponds to 242-249; it reads YFHQYTHK. The active site involves His-244. A helical membrane pass occupies residues 250 to 270; that stretch reads VVGAAVGTFAWYLTYGSWYHQ. The Cytoplasmic portion of the chain corresponds to 271 to 292; sequence PWSPGSPGHGLFPRPHSSRKHN.

It belongs to the FIT family. FIT1 subfamily. Primarily expressed in heart and skeletal muscle.

Its subcellular location is the endoplasmic reticulum membrane. Functionally, plays an important role in the formation of lipid droplets (LDs) which are storage organelles at the center of lipid and energy homeostasis. Directly binds to diacylglycerol (DAGs) and triacylglycerol. The chain is Fat storage-inducing transmembrane protein 1 from Homo sapiens (Human).